Reading from the N-terminus, the 171-residue chain is Shikimate kinase (171 aa).

Residue Gly-14–Thr-19 coordinates ATP. Residue Ser-18 coordinates Mg(2+). Substrate contacts are provided by Asp-36, Arg-60, and Gly-82. Arg-120 serves as a coordination point for ATP. Arg-139 contacts substrate. Residue Gln-156 participates in ATP binding.

The protein belongs to the shikimate kinase family. Monomer. Mg(2+) serves as cofactor.

The protein resides in the cytoplasm. It catalyses the reaction shikimate + ATP = 3-phosphoshikimate + ADP + H(+). The protein operates within metabolic intermediate biosynthesis; chorismate biosynthesis; chorismate from D-erythrose 4-phosphate and phosphoenolpyruvate: step 5/7. Its function is as follows. Catalyzes the specific phosphorylation of the 3-hydroxyl group of shikimic acid using ATP as a cosubstrate. The polypeptide is Shikimate kinase (Shewanella frigidimarina (strain NCIMB 400)).